The primary structure comprises 463 residues: tRNA-2-methylthio-N(6)-dimethylallyladenosine synthase (463 aa).

One can recognise an MTTase N-terminal domain in the interval Gly-19–Ser-135. [4Fe-4S] cluster is bound by residues Cys-28, Cys-64, Cys-98, Cys-170, Cys-174, and Cys-177. Residues Arg-156–Glu-393 enclose the Radical SAM core domain. The region spanning Gln-396 to Leu-463 is the TRAM domain.

This sequence belongs to the methylthiotransferase family. MiaB subfamily. In terms of assembly, monomer. [4Fe-4S] cluster serves as cofactor.

The protein resides in the cytoplasm. It catalyses the reaction N(6)-dimethylallyladenosine(37) in tRNA + (sulfur carrier)-SH + AH2 + 2 S-adenosyl-L-methionine = 2-methylsulfanyl-N(6)-dimethylallyladenosine(37) in tRNA + (sulfur carrier)-H + 5'-deoxyadenosine + L-methionine + A + S-adenosyl-L-homocysteine + 2 H(+). Catalyzes the methylthiolation of N6-(dimethylallyl)adenosine (i(6)A), leading to the formation of 2-methylthio-N6-(dimethylallyl)adenosine (ms(2)i(6)A) at position 37 in tRNAs that read codons beginning with uridine. This Prochlorococcus marinus (strain NATL1A) protein is tRNA-2-methylthio-N(6)-dimethylallyladenosine synthase.